A 217-amino-acid polypeptide reads, in one-letter code: Protein-methionine-sulfoxide reductase heme-binding subunit MsrQ (217 aa).

Transmembrane regions (helical) follow at residues 82 to 102, 118 to 138, 150 to 170, and 180 to 200; these read MLGL…LLVD, PFIT…ATST, WQWL…HYWW, and EVSI…WWVW.

Belongs to the MsrQ family. In terms of assembly, heterodimer of a catalytic subunit (MsrP) and a heme-binding subunit (MsrQ). It depends on FMN as a cofactor. The cofactor is heme b.

Its subcellular location is the cell inner membrane. In terms of biological role, part of the MsrPQ system that repairs oxidized periplasmic proteins containing methionine sulfoxide residues (Met-O), using respiratory chain electrons. Thus protects these proteins from oxidative-stress damage caused by reactive species of oxygen and chlorine generated by the host defense mechanisms. MsrPQ is essential for the maintenance of envelope integrity under bleach stress, rescuing a wide series of structurally unrelated periplasmic proteins from methionine oxidation. MsrQ provides electrons for reduction to the reductase catalytic subunit MsrP, using the quinone pool of the respiratory chain. In Ralstonia nicotianae (strain ATCC BAA-1114 / GMI1000) (Ralstonia solanacearum), this protein is Protein-methionine-sulfoxide reductase heme-binding subunit MsrQ.